The sequence spans 140 residues: Phosphopantetheine adenylyltransferase (140 aa).

Ser-9 is a substrate binding site. Residues 9–10 and His-17 each bind ATP; that span reads SF. Lys-41, Thr-74, and Arg-88 together coordinate substrate. ATP contacts are provided by residues 89–91, Glu-99, and 124–130; these read GLR and KRSLSST.

It belongs to the bacterial CoaD family. In terms of assembly, homohexamer. Mg(2+) is required as a cofactor.

The protein resides in the cytoplasm. The catalysed reaction is (R)-4'-phosphopantetheine + ATP + H(+) = 3'-dephospho-CoA + diphosphate. It functions in the pathway cofactor biosynthesis; coenzyme A biosynthesis; CoA from (R)-pantothenate: step 4/5. In terms of biological role, reversibly transfers an adenylyl group from ATP to 4'-phosphopantetheine, yielding dephospho-CoA (dPCoA) and pyrophosphate. This is Phosphopantetheine adenylyltransferase from Mycoplasma mycoides subsp. mycoides SC (strain CCUG 32753 / NCTC 10114 / PG1).